The chain runs to 424 residues: Chloroquine resistance transporter (424 aa).

Topologically, residues 1–58 are cytoplasmic; sequence MKFASKKNNQKNSSKNDERYRELDNLVQEGNGSRLGGGSCLGKCAHVFKLIFKEIKDN. Residues 59–79 traverse the membrane as a helical segment; it reads IFIYILSIIYLSVCVMNKIFA. The Vacuolar segment spans residues 80 to 90; that stretch reads KRTLNKIGNYS. N88 carries an N-linked (GlcNAc...) asparagine glycan. Residues 91–111 form a helical membrane-spanning segment; it reads FVTSETHNFICMIMFFIVYSL. Residues 112–127 are Cytoplasmic-facing; that stretch reads FGNKKGNSKERHRSFN. Residues 128 to 148 traverse the membrane as a helical segment; it reads LQFFAISMLDACSVILAFIGL. The Vacuolar portion of the chain corresponds to 149–154; that stretch reads TRTTGN. The chain crosses the membrane as a helical span at residues 155-175; it reads IQSFVLQLSIPINMFFCFLIL. The Cytoplasmic segment spans residues 176-178; sequence RYR. Residues 179–199 traverse the membrane as a helical segment; sequence YHLYNYLGAVIIVVTIALVEM. At 200–209 the chain is on the vacuolar side; it reads KLSFETQEEN. A helical membrane pass occupies residues 210–230; that stretch reads SIIFNLVLISALIPVCFSNMT. The Cytoplasmic segment spans residues 231–248; the sequence is REIVFKKYKIDILRLNAM. A helical membrane pass occupies residues 249 to 269; it reads VSFFQLFTSCLILPVYTLPFL. The Vacuolar portion of the chain corresponds to 270–317; sequence KQLHLPYNEIWTNIKNGFACLFLGRNTVVENCGLGMAKLCDDCDGAWK. Cystine bridges form between C289–C312 and C301–C309. The helical transmembrane segment at 318 to 338 threads the bilayer; that stretch reads TFALFSFFNICDNLITSYIID. Residues 339 to 346 lie on the Cytoplasmic side of the membrane; sequence KFSTMTYT. A helical membrane pass occupies residues 347-367; the sequence is IVSCIQGPAIAIAYYFKFLAG. Topologically, residues 368–377 are vacuolar; that stretch reads DVVREPRLLD. The chain crosses the membrane as a helical span at residues 378–398; that stretch reads FVTLFGYLFGSIIYRVGNIIL. The Cytoplasmic segment spans residues 399 to 424; that stretch reads ERKKMRNEENEDSEGELTNVDSIITQ.

It belongs to the CRT-like transporter family. In terms of assembly, monomer.

The protein resides in the vacuole membrane. It catalyses the reaction L-arginine(in) = L-arginine(out). The enzyme catalyses L-lysine(in) = L-lysine(out). The catalysed reaction is L-histidine(out) = L-histidine(in). It carries out the reaction histamine(out) = histamine(in). It catalyses the reaction spermidine(in) = spermidine(out). The enzyme catalyses Fe(3+)(in) = Fe(3+)(out). The catalysed reaction is Fe(2+)(in) = Fe(2+)(out). Its activity is regulated as follows. Transporter activity is trans-stimulated by host-derived peptides containing 4-11 amino acids. Trans-stimulation by hemoglobin-derived peptide VDPVNF is pH-dependent and sodium-independent. Saquinavir trans-stimulates transport of hemoglobin-derived peptide VDPVNF. Protons are non-competitive inhibitors of chloroquine transport. Functionally, nutrient transporter. Substrate transport is pH-dependent. Can transport arginine, lysine, histidine, peptides, histamine and spermidine. May modulate activity of endogenous transporters. Involved in maintaining the osmotic homeostasis of the digestive vacuole. Required for the asexual intraerythrocytic proliferation of parasites. Can transport Fe(2+) and Fe(3+). This Plasmodium falciparum protein is Chloroquine resistance transporter.